Reading from the N-terminus, the 444-residue chain is Exodeoxyribonuclease 7 large subunit (444 aa).

Belongs to the XseA family. Heterooligomer composed of large and small subunits.

The protein localises to the cytoplasm. It catalyses the reaction Exonucleolytic cleavage in either 5'- to 3'- or 3'- to 5'-direction to yield nucleoside 5'-phosphates.. Bidirectionally degrades single-stranded DNA into large acid-insoluble oligonucleotides, which are then degraded further into small acid-soluble oligonucleotides. The polypeptide is Exodeoxyribonuclease 7 large subunit (Pseudoalteromonas atlantica (strain T6c / ATCC BAA-1087)).